The following is a 594-amino-acid chain: MDSSDLDKGLTIDEIIAKCIQSFDKDGKLSDPKLVQMFLMMHPWYIPSGDLAKKLFALSESGDNVERERICQFVRFWISEFPAEFDLNPELGEQIRDLKRALENKGNRRESSLIDIESVPSYGWKRQVTQRGPGGGRVRKTSLLFDHLDPAELAEHLTHLEFHSFSKILFQDYHSFVLHGCTVGNPVLERFIALFNGVSQWIQLMVLSKHTPQQRAAVIKQFVQVAERLLQMQNFNTLMSVVGGLSHSSISRLKDTQSHISPETTKVYDSLLELLTSSDNYARYRRRFATCKGFRFPALGVHLKDLMALHVALPDWADKAKTIINISKMRQVYKVVHELTEAQRLEPPVKANPDLLNLLTVSLDQYRSEEEIYQLSLQREPRARSTQTHAKSPPSPSPPLEEWASLKAKPDQALLCQHIEKMVESVFRLFDEDGDGHISQEEFQSVRSNFPYLCAFNEIDQNQDGKISKQEMTSYFLRASSVLDCKMGFIHNFAERTFLRPVSCQHCRNLILGIYKKGLKCKACGITCHKHCRDHLSIECKKRSKSVSERGESMEKGRHFFFTLPRSFRRSTLYPDLREEEPHMEDDGVFDDHL.

An N-terminal Ras-GEF domain is found at serine 3 to serine 121. The Ras-GEF domain occupies aspartate 149–arginine 382. The segment at leucine 377–tryptophan 403 is disordered. EF-hand domains follow at residues histidine 418 to leucine 453 and alanine 455 to valine 482. Residues aspartate 431, aspartate 433, aspartate 435, histidine 437, glutamate 442, aspartate 460, asparagine 462, aspartate 464, lysine 466, and glutamate 471 each contribute to the Ca(2+) site. The Phorbol-ester/DAG-type zinc-finger motif lies at isoleucine 490 to cysteine 540.

It belongs to the RASGRP family.

The protein resides in the cytoplasm. Its subcellular location is the cytosol. It localises to the cell membrane. The protein localises to the synapse. It is found in the synaptosome. Functions as a calcium- and DAG-regulated nucleotide exchange factor specifically activating Rap through the exchange of bound GDP for GTP. May function in cell aggregation and adhesion. This Xenopus laevis (African clawed frog) protein is RAS guanyl-releasing protein 2-B (rasgrp2-b).